The chain runs to 1065 residues: N-terminal acetyltransferase B complex auxiliary subunit NAA25 (1065 aa).

Residues 294–327 (VDKLRIQGRLLARANDYSAAVDVYKKILELSPDD) form a TPR repeat.

This sequence belongs to the MDM20/NAA25 family. In terms of tissue distribution, ubiquitously expressed, with a higher expression in vascular bundles, hydathodes, leaf primordia and the base of the trichomes.

The protein resides in the cytoplasm. Auxiliary subunit of the NatB N-alpha-acetyltransferase complex. Required for flowering time regulation and for vegetative and reproductive plant development. This chain is N-terminal acetyltransferase B complex auxiliary subunit NAA25, found in Arabidopsis thaliana (Mouse-ear cress).